The primary structure comprises 579 residues: uncharacterized protein (579 aa).

Helical transmembrane passes span 13–35 (DLIK…IPWI), 39–61 (SISR…LLLN), 66–83 (ANGL…AFYF), 93–110 (AYWG…TYPL), 130–152 (LAIV…IEYL), 162–181 (IVPK…FFLI), 201–223 (LIVN…LYLA), 238–257 (YIIM…RLLL), 264–286 (GFYR…GIHT), 296–315 (IRVM…LFSM), and 324–346 (LFSL…YYLA).

The protein localises to the cell membrane. This is an uncharacterized protein from Pasteurella multocida (strain Pm70).